Reading from the N-terminus, the 137-residue chain is Translation initiation factor 2 subunit beta (137 aa).

The protein belongs to the eIF-2-beta/eIF-5 family. In terms of assembly, heterotrimer composed of an alpha, a beta and a gamma chain.

Its function is as follows. eIF-2 functions in the early steps of protein synthesis by forming a ternary complex with GTP and initiator tRNA. The chain is Translation initiation factor 2 subunit beta (eif2b) from Archaeoglobus fulgidus (strain ATCC 49558 / DSM 4304 / JCM 9628 / NBRC 100126 / VC-16).